The primary structure comprises 647 residues: Probable squalene--hopene cyclase (647 aa).

One copy of the PFTB 1 repeat lies at 67–108; that stretch reads EAKIGNYLRRTQGAHGGWPLVHDGPFDMSASVKSYFALKMIG. Asp388 functions as the Proton donor in the catalytic mechanism. PFTB repeat units lie at residues 413–454 and 530–577; these read IARG…GALL and IRKA…ALLG.

This sequence belongs to the terpene cyclase/mutase family.

It carries out the reaction squalene = hop-22(29)-ene. The catalysed reaction is squalene + H2O = hopan-22-ol. The protein operates within secondary metabolite biosynthesis; hopanoid biosynthesis. Catalyzes the cyclization of squalene into hopene. Probably part of an operon y4aABCD involved in the synthesis of an isoprenoid compound. This Sinorhizobium fredii (strain NBRC 101917 / NGR234) protein is Probable squalene--hopene cyclase (shc).